We begin with the raw amino-acid sequence, 342 residues long: dTDP-3,4-didehydro-2,6-dideoxy-alpha-D-glucose 3-reductase (342 aa).

19–25 (CADIALR) provides a ligand contact to NADP(+). Arg26 contributes to the substrate binding site. Residues 44 to 45 (SR), Tyr65, Leu81, and His86 contribute to the NADP(+) site. The active-site Proton donor is Lys104. NADP(+) contacts are provided by Arg172 and Asp184. The substrate site is built by Tyr243 and Ser263.

The protein belongs to the Gfo/Idh/MocA family.

The enzyme catalyses dTDP-4-dehydro-2,6-dideoxy-alpha-D-glucose + NADP(+) = dTDP-3,4-didehydro-2,6-dideoxy-alpha-D-glucose + NADPH + H(+). It participates in antibiotic biosynthesis; granaticin biosynthesis. Involved in the biosynthesis of the 2,6-deoxysugar, dTDP-L-rhodinose, attached to the benzoisochromane quinone chromophore to produce the aglycone antibiotics granaticin and granaticin B. Catalyzes the reduction of the C-3 keto moiety of dTDP-3,4-diketo-2,6-dideoxy-alpha-D-glucose to yield dTDP-4-keto-2,6-dideoxy-alpha-D-glucose. NADPH is the better reductant, however NADH can also be used. The sequence is that of dTDP-3,4-didehydro-2,6-dideoxy-alpha-D-glucose 3-reductase from Streptomyces violaceoruber.